The sequence spans 184 residues: Glutathione-regulated potassium-efflux system ancillary protein KefG (184 aa).

The protein belongs to the NAD(P)H dehydrogenase (quinone) family. KefG subfamily. In terms of assembly, interacts with KefB.

The protein localises to the cell inner membrane. It catalyses the reaction a quinone + NADH + H(+) = a quinol + NAD(+). The catalysed reaction is a quinone + NADPH + H(+) = a quinol + NADP(+). In terms of biological role, regulatory subunit of a potassium efflux system that confers protection against electrophiles. Required for full activity of KefB. This Erwinia tasmaniensis (strain DSM 17950 / CFBP 7177 / CIP 109463 / NCPPB 4357 / Et1/99) protein is Glutathione-regulated potassium-efflux system ancillary protein KefG.